The chain runs to 921 residues: Protein translocase subunit SecA (921 aa).

ATP is bound by residues glutamine 85, 103 to 107 (GEGKT), and aspartate 514. Residues cysteine 905, cysteine 907, cysteine 916, and histidine 917 each coordinate Zn(2+).

The protein belongs to the SecA family. In terms of assembly, monomer and homodimer. Part of the essential Sec protein translocation apparatus which comprises SecA, SecYEG and auxiliary proteins SecDF-YajC and YidC. Zn(2+) serves as cofactor.

The protein localises to the cell inner membrane. It is found in the cytoplasm. It catalyses the reaction ATP + H2O + cellular proteinSide 1 = ADP + phosphate + cellular proteinSide 2.. Its function is as follows. Part of the Sec protein translocase complex. Interacts with the SecYEG preprotein conducting channel. Has a central role in coupling the hydrolysis of ATP to the transfer of proteins into and across the cell membrane, serving both as a receptor for the preprotein-SecB complex and as an ATP-driven molecular motor driving the stepwise translocation of polypeptide chains across the membrane. The sequence is that of Protein translocase subunit SecA from Herminiimonas arsenicoxydans.